The primary structure comprises 210 residues: Somatotropin-2 (210 aa).

The signal sequence occupies residues 1–22 (MGQVFLLMPVLLVSCFLSQGAA). Histidine 38 is a Zn(2+) binding site. Cysteine 71 and cysteine 183 are disulfide-bonded. Glutamate 192 serves as a coordination point for Zn(2+). The cysteines at positions 200 and 208 are disulfide-linked.

The protein belongs to the somatotropin/prolactin family.

It is found in the secreted. In terms of biological role, growth hormone plays an important role in growth control and is involved in the regulation of several anabolic processes. Implicated as an osmoregulatory substance important for seawater adaptation. The sequence is that of Somatotropin-2 (gh2) from Oncorhynchus nerka (Sockeye salmon).